Here is a 1839-residue protein sequence, read N- to C-terminus: Mannuronan C5-epimerase AlgE3 (1839 aa).

8 PbH1 repeats span residues 133–155 (DRDVTLERVEIREMSGYGFDPHE), 157–179 (TINLTIRDSVAHDNGLDGFVADY), 180–202 (QVGGVFENNVSYNNDRHGFNIVT), 204–226 (TNDFVLSNNVAYGNGGAGLVVQR), 257–279 (THDVTLQNAEIYGNGLYGVRVYG), 280–302 (AQDVQLLDNQIHDNSQNGAYAEV), 320–342 (TTGTWLEGNVISGSANSTFGIQE), and 347–369 (TDYSSLYANTIDGVQNGTVRLYG). Positions 372–386 (STVSEQPSSGQQATL) are enriched in polar residues. The tract at residues 372-392 (STVSEQPSSGQQATLEGTAGN) is disordered. Hemolysin-type calcium-binding repeat units follow at residues 387–399 (EGTAGNDVLSGTG), 406–422 (GLAGNDRLDGGAGDDTL), 424–440 (GGAGRDTLTGGAGADTF), 538–550 (TGTEGNDNLSGTD), 557–573 (GYGGNDTLNGGAGNDIL), 574–591 (VGGAGRDTLTGGAGADVF), 695–709 (EGTDGNDSLQGTGAD), 714–730 (GLGGRDSLNGGAGDDVL), and 732–748 (GGAERDTLTGGTGADTF). 8 PbH1 repeats span residues 975–997 (DRNVTLERVEIREMSGYGFDPHE), 999–1021 (TINLTIRDSVAHDNGLDGFVADY), 1022–1044 (LVDSVFENNVAYNNDRHGFNVVT), 1046–1068 (TYDFTLSNNVAYGNGGAGLVIQR), 1099–1121 (TNNITLQNAEIYGNGYSGVRLYG), 1122–1143 (TEDVQILNNQIHDNAQNVAYAE), 1161–1183 (TTGTWIEGNVISGSANSTYGIEE), and 1188–1210 (TDYSSLYANTIDGVQTGAVRLNG). Over residues 1215 to 1236 (VSDQPGTGQQATLEGTTGNDTL) the composition is skewed to polar residues. The disordered stretch occupies residues 1215–1238 (VSDQPGTGQQATLEGTTGNDTLGG). Hemolysin-type calcium-binding repeat units lie at residues 1229–1243 (GTTGNDTLGGSDAHE), 1247–1263 (GLDGDDRLDGGAGNDIL), 1265–1281 (GGVGRDTLTGGAGADTF), 1398–1414 (GHAGNDTLDGAGGDDIL), 1415–1432 (VGGAGSDSLTGGAGADVF), 1536–1552 (EGTAGNDSLQGTAADEV), 1554–1571 (HGGSGRDTLAGGAGADVF), 1670–1681 (GGDGNDTLSGGS), 1688–1704 (GGAGNDSLSGGAGNDIL), and 1706–1722 (GGAGRDTLSGGSGSDIF).

This sequence belongs to the D-mannuronate C5-epimerase family. The cofactor is Ca(2+).

It is found in the secreted. The catalysed reaction is [(1-&gt;4)-beta-D-mannuronosyl](n) = [alginate](n). It functions in the pathway glycan biosynthesis; alginate biosynthesis. With respect to regulation, inhibited by zinc. Converts beta-D-mannuronic acid (M) to alpha-L-guluronic acid (G), producing a polymer with gel-forming capacity, required for the formation of the cyst coat. This Azotobacter vinelandii protein is Mannuronan C5-epimerase AlgE3.